The sequence spans 269 residues: GRF-interacting factor 10 (269 aa).

A disordered region spans residues 1–71 (MTAEGEAKNP…GEKDDGACRD (71 aa)). Positions 22 to 43 (QQAAPAPAPAQGEVAQEAAVQG) are enriched in low complexity. A compositionally biased stretch (basic and acidic residues) spans 47-69 (EQERDKADREVQGGAGEKDDGAC). One can recognise a QLQ domain in the interval 113–148 (AFTAMQLQELEQQSRVYQYMAARVPVPTHLVFPVWK). In terms of domain architecture, WRC spans 179-223 (EPEPGRCRRTDGKKWRCWRNTIPNEKYCERHMHRGRKRPVQVFLE). Short sequence motifs (bipartite nuclear localization signal) lie at residues 184–194 (RCRRTDGKKWR) and 212–216 (RGRKR). The disordered stretch occupies residues 217–269 (PVQVFLEDDEPDSASGSKPAAPGKATEGAKKADDKSPSSKKLAVAAPAAVQST). Residues 243-253 (EGAKKADDKSP) are compositionally biased toward basic and acidic residues.

Belongs to the GRF family. In terms of assembly, interacts with GIF1. As to expression, highly expressed in shoots. Expressed in developing leaves.

The protein resides in the nucleus. In terms of biological role, involved in the regulation of cell proliferation in developing shoots and leaves. Does not possess transactivation activity. The chain is GRF-interacting factor 10 from Zea mays (Maize).